A 942-amino-acid polypeptide reads, in one-letter code: Endoprotease bli-4 (942 aa).

Positions 1–22 are cleaved as a signal peptide; it reads MRISIGRIAWQILAVLIAVAFT. A propeptide spanning residues 23–116 is cleaved from the precursor; sequence IEHDSICDES…EQRPKKRVKR (94 aa). Over 117–871 the chain is Lumenal; the sequence is DYILLDNDVH…TLLIDSNKSS (755 aa). D124 contributes to the Ca(2+) binding site. The tract at residues 130–160 is disordered; the sequence is PFRRSVLNRDGTRRAQRQQPQSPREIPSLPF. A Peptidase S8 domain is found at 168-483; sequence QWYLHGGAVG…YGLIDGGALV (316 aa). N-linked (GlcNAc...) asparagine glycosylation occurs at N195. D202 acts as the Charge relay system in catalysis. Substrate is bound at residue D203. Positions 211, 223, 228, and 230 each coordinate Ca(2+). Residues 211 to 242 are disordered; it reads DLAANYDPLASTDINDHDDDPTPQNNGDNKHG. 238–239 is a binding site for substrate; sequence DN. H241 (charge relay system) is an active-site residue. L252, N255, Q257, and G259 together coordinate Ca(2+). 2 disulfide bridges follow: C258/C407 and C350/C380. Substrate is bound by residues E283, 300-305, D311, and 339-342; these read SWGPED and ASGN. D305 is a binding site for Ca(2+). D348 is a Ca(2+) binding site. Positions 353 and 355 each coordinate substrate. E378 is a binding site for Ca(2+). S415 acts as the Charge relay system in catalysis. Substrate is bound at residue S415. The region spanning 491 to 629 is the P/Homo B domain; that stretch reads TVPEQHICTY…TLLLYGTADP (139 aa). C498 and C527 are joined by a disulfide. N519 carries N-linked (GlcNAc...) asparagine glycosylation. 3 FU repeats span residues 674–723, 725–777, and 804–850; these read NCHD…YYLD, DKCK…LVAD, and GKCD…STKS. N868 is a glycosylation site (N-linked (GlcNAc...) asparagine). The helical transmembrane segment at 872–892 threads the bilayer; it reads GFGLMFWIVVSLIAACGICAC. The Cytoplasmic segment spans residues 893 to 942; sequence KKCASETKSSNVEYAPLAQYNATNGAINLGAHTDDEDDDEDEVFVNPQIV. The disordered stretch occupies residues 922–942; that stretch reads GAHTDDEDDDEDEVFVNPQIV. Over residues 926 to 935 the composition is skewed to acidic residues; sequence DDEDDDEDEV.

The protein belongs to the peptidase S8 family. Furin subfamily. Requires Ca(2+) as cofactor. In terms of tissue distribution, in larvae and adults, expressed in all hypodermal cells, vulva and ventral nerve cords. Most highly expressed isoform in the embryonic epidermis. As to expression, expressed primarily in the germline. In terms of tissue distribution, expressed primarily in pharyngeal epithelial cells.

It is found in the membrane. Functionally, serine endoprotease which cleaves proproteins at paired basic amino acids at the consensus RX(K/R)R motif. Involved in N-terminal processing of cuticle collagens and plays a role in cuticle biosynthesis. May cleave both sqt-3 and dpy-17 collagens to promote their secretion. Acts in ASEL sensory neurons to regulate high salt chemotaxis responses probably by cleaving insulin-like protein ins-6 into its mature and active form. Essential for embryonic and larval development. Its function is as follows. Involved in cuticle biosynthesis but dispensable for larval development. The polypeptide is Endoprotease bli-4 (bli-4) (Caenorhabditis elegans).